A 519-amino-acid chain; its full sequence is Protein amnionless (519 aa).

The signal sequence occupies residues 1 to 19 (MGAPGRVLLWLQLCALTRA). Residues 20–430 (AYKLWVPNTY…NAPGARSDLM (411 aa)) lie on the Extracellular side of the membrane. Asparagine 35 and asparagine 39 each carry an N-linked (GlcNAc...) asparagine glycan. 6 disulfide bridges follow: cysteine 43/cysteine 152, cysteine 193/cysteine 267, cysteine 259/cysteine 265, cysteine 277/cysteine 303, cysteine 288/cysteine 304, and cysteine 293/cysteine 307. The segment at 67 to 143 (SDMEELQDRK…VLASGAGFSA (77 aa)) is interaction with CUBN. In terms of domain architecture, VWFC spans 256 to 308 (PEACADPSGCVCGNAEVQPWICAALLQPLGGRCPQAACQDALRPEGQCCDLCG). A helical transmembrane segment spans residues 431-451 (GGLVAALLLLLLVLLVAALLL). Residues 452–519 (RRAGRLRWSR…YGEAEAEAEA (68 aa)) are Cytoplasmic-facing.

Interacts (via extracellular region) with CUBN/cubilin, giving rise to a huge complex containing one AMN chain and three CUBN chains. Post-translationally, N-glycosylated. In terms of processing, a soluble form arises by proteolytic removal of the membrane anchor. Detected in kidney cortex (at protein level).

The protein resides in the apical cell membrane. Its subcellular location is the cell membrane. It is found in the endosome membrane. The protein localises to the membrane. It localises to the coated pit. In terms of biological role, membrane-bound component of the endocytic receptor formed by AMN and CUBN. Required for normal CUBN glycosylation and trafficking to the cell surface. The complex formed by AMN and CUBN is required for efficient absorption of vitamin B12. Required for normal CUBN-mediated protein transport in the kidney. The polypeptide is Protein amnionless (AMN) (Sus scrofa (Pig)).